The sequence spans 495 residues: Tyrosine 3-monooxygenase (495 aa).

Phosphoserine; by CaMK2 is present on Ser-19. Ser-31 is subject to Phosphoserine. Ser-40 carries the post-translational modification Phosphoserine; by CaMK2 and PKA. Positions 41-53 (LIEDARKEREKAE) are enriched in basic and acidic residues. Residues 41 to 65 (LIEDARKEREKAEAASAASSEPGDL) are disordered. Positions 328, 333, and 373 each coordinate Fe cation. Ser-469 bears the Phosphoserine mark.

Belongs to the biopterin-dependent aromatic amino acid hydroxylase family. As to quaternary structure, homotetramer. Interacts (when phosphorylated at Ser-19) with YWHAG; one YWHAG dimer bounds to one TH tetramer this interaction may influence the phosphorylation and dephosphorylation of other sites. Fe(2+) serves as cofactor. Post-translationally, phosphorylated on Ser-19, Ser-31 and Ser-40 by several protein kinases with different site specificities. Phosphorylation at Ser-31 and Ser-40 leads to an increase of TH activity. Phosphorylation at Ser-40 activates the enzyme and also counteracts the feedback inhibition of TH by catecholamines. Phosphorylation of Ser-19 and Ser-31 triggers the proteasomal degradation of TH through the ubiquitin-proteasome pathway. Phosphorylation at Ser-31 facilitates transport of TH from the soma to the nerve terminals via the microtubule network. Phosphorylation at Ser-19 induces the high-affinity binding to the 14-3-3 protein YWHAG; this interaction may influence the phosphorylation and dephosphorylation of other sites. Ser-19 increases the phosphorylation at Ser-40 in a hierarchical manner, leading to increased activity.

Its subcellular location is the cytoplasm. It is found in the perinuclear region. It localises to the nucleus. The protein resides in the cell projection. The protein localises to the axon. Its subcellular location is the cytoplasmic vesicle. It is found in the secretory vesicle. It localises to the synaptic vesicle. It carries out the reaction (6R)-L-erythro-5,6,7,8-tetrahydrobiopterin + L-tyrosine + O2 = (4aS,6R)-4a-hydroxy-L-erythro-5,6,7,8-tetrahydrobiopterin + L-dopa. It participates in catecholamine biosynthesis; dopamine biosynthesis; dopamine from L-tyrosine: step 1/2. With respect to regulation, inhibited in feedback fashion by the catecholamine neurotransmitters, especially by dopamine in competition with tetrahydrobiopterin. Phosphorylation of several Ser/Thr residues in the N-terminus regulates the catalytic activity. Ser-31 and Ser-40 are readily phosphorylated to activate the catalytic activity. A Cysteine modification induced by N-ethylmaleimide (NEM), inhibits tyrosine 3-monooxygenase activity through the modification of the Cys-174. Its function is as follows. Catalyzes the conversion of L-tyrosine to L-dihydroxyphenylalanine (L-Dopa), the rate-limiting step in the biosynthesis of cathecolamines, dopamine, noradrenaline, and adrenaline. Uses tetrahydrobiopterin and molecular oxygen to convert tyrosine to L-Dopa. In addition to tyrosine, is able to catalyze the hydroxylation of phenylalanine and tryptophan with lower specificity. Positively regulates the regression of retinal hyaloid vessels during postnatal development. The chain is Tyrosine 3-monooxygenase (TH) from Canis lupus familiaris (Dog).